An 807-amino-acid chain; its full sequence is Lysyl oxidase homolog 3B (807 aa).

An N-terminal signal peptide occupies residues 1–24 (MELHQWCRHIIVFLLNVWIPSCFA). 5 consecutive SRCR domains span residues 49–150 (FRLS…VICK), 175–288 (VRLR…VSCV), 309–409 (TRLK…VRCN), 419–470 (VRIL…LGYA), and 476–579 (VRLS…VICS). Intrachain disulfides connect C75-C139, C88-C149, C119-C129, C207-C277, C220-C287, C254-C264, C334-C398, C347-C408, and C378-C388. N272 carries N-linked (GlcNAc...) asparagine glycosylation. Residue N392 is glycosylated (N-linked (GlcNAc...) asparagine). 2 cysteine pairs are disulfide-bonded: C514-C578 and C547-C557. N536 carries N-linked (GlcNAc...) asparagine glycosylation. N679 is a glycosylation site (N-linked (GlcNAc...) asparagine). Residues 688-724 (KASFCLEDTDCDEGVSKRYKCANFGEQGITVGCWDLY) constitute a cross-link (lysine tyrosylquinone (Lys-Tyr)). Y724 is modified (2',4',5'-topaquinone).

The protein belongs to the lysyl oxidase family. Cu cation serves as cofactor. Requires lysine tyrosylquinone residue as cofactor. Post-translationally, the lysine tyrosylquinone cross-link (LTQ) is generated by condensation of the epsilon-amino group of a lysine with a topaquinone produced by oxidation of tyrosine.

It localises to the secreted. The protein localises to the extracellular space. It is found in the cytoplasm. The protein resides in the nucleus. It carries out the reaction L-lysyl-[protein] + O2 + H2O = (S)-2-amino-6-oxohexanoyl-[protein] + H2O2 + NH4(+). It catalyses the reaction N(6)-acetyl-L-lysyl-[protein] + O2 + H2O = acetamide + (S)-2-amino-6-oxohexanoyl-[protein] + H2O2. Functionally, protein-lysine 6-oxidase that mediates the oxidation of peptidyl lysine residues to allysine in target proteins. Catalyzes the post-translational oxidative deamination of peptidyl lysine residues in precursors of elastin and different types of collagens, a prerequisite in the formation of cross-links between collagens and elastin. Can mediate oxidation of lysine residues that are acetylated. Also able to catalyze deacetylation of lysine residues. Required for maturation of neural crest derived cartilage elements. In Danio rerio (Zebrafish), this protein is Lysyl oxidase homolog 3B.